The sequence spans 133 residues: Small ribosomal subunit protein uS11 (133 aa).

The protein belongs to the universal ribosomal protein uS11 family. In terms of assembly, part of the 30S ribosomal subunit. Interacts with proteins S7 and S18. Binds to IF-3.

In terms of biological role, located on the platform of the 30S subunit, it bridges several disparate RNA helices of the 16S rRNA. Forms part of the Shine-Dalgarno cleft in the 70S ribosome. The protein is Small ribosomal subunit protein uS11 of Burkholderia pseudomallei (strain 1106a).